The following is a 440-amino-acid chain: Light-independent protochlorophyllide reductase subunit B (440 aa).

A [4Fe-4S] cluster-binding site is contributed by Asp36. Residue 427-428 (KD) coordinates substrate.

It belongs to the ChlB/BchB/BchZ family. Protochlorophyllide reductase is composed of three subunits; ChlL, ChlN and ChlB. Forms a heterotetramer of two ChlB and two ChlN subunits. [4Fe-4S] cluster is required as a cofactor.

It is found in the plastid. It localises to the cyanelle. The enzyme catalyses chlorophyllide a + oxidized 2[4Fe-4S]-[ferredoxin] + 2 ADP + 2 phosphate = protochlorophyllide a + reduced 2[4Fe-4S]-[ferredoxin] + 2 ATP + 2 H2O. It functions in the pathway porphyrin-containing compound metabolism; chlorophyll biosynthesis (light-independent). In terms of biological role, component of the dark-operative protochlorophyllide reductase (DPOR) that uses Mg-ATP and reduced ferredoxin to reduce ring D of protochlorophyllide (Pchlide) to form chlorophyllide a (Chlide). This reaction is light-independent. The NB-protein (ChlN-ChlB) is the catalytic component of the complex. The chain is Light-independent protochlorophyllide reductase subunit B from Cyanophora paradoxa.